The following is a 188-amino-acid chain: MINAQDIKNGTCIRMDGKLYFCIEFLHVKPGKGNTFMRTKLKDVVSGYVLERRFNIGEKLEDVRVERRPYQFLYKEGEDYIFMNQETFDQHPIAHDLINGVDFLLEGAVLDVVSDASTETVLYADMPIKVQMKVTYTEPGMKGDTATNTLKPATVESGATVRVPLFISEGETIEIDTRDGSYVGRVKA.

It belongs to the elongation factor P family.

The protein localises to the cytoplasm. Its pathway is protein biosynthesis; polypeptide chain elongation. Its function is as follows. Involved in peptide bond synthesis. Stimulates efficient translation and peptide-bond synthesis on native or reconstituted 70S ribosomes in vitro. Probably functions indirectly by altering the affinity of the ribosome for aminoacyl-tRNA, thus increasing their reactivity as acceptors for peptidyl transferase. The chain is Elongation factor P from Bacteroides thetaiotaomicron (strain ATCC 29148 / DSM 2079 / JCM 5827 / CCUG 10774 / NCTC 10582 / VPI-5482 / E50).